The following is a 74-amino-acid chain: U12-theraphotoxin-Hs1a (74 aa).

The signal sequence occupies residues 1-20; sequence MNVKILLLLVGLNLVMHSNA. The propeptide occupies 21–40; that stretch reads TGDSETNPAETLFIEEIFRR. Cystine bridges form between C42–C56, C49–C61, and C55–C71.

It belongs to the neurotoxin 35 family. As to expression, expressed by the venom gland.

The protein resides in the secreted. Putative ion channel inhibitor. This is U12-theraphotoxin-Hs1a from Cyriopagopus schmidti (Chinese bird spider).